A 321-amino-acid polypeptide reads, in one-letter code: Probable protein phosphatase 2C 44 (321 aa).

Disordered regions lie at residues 1–36 (MVGR…GGKK) and 51–70 (NSSS…NKVT). A compositionally biased stretch (low complexity) spans 9–31 (SASSSASCSPSSSAAGTSSSSSA). A compositionally biased stretch (polar residues) spans 51-69 (NSSSTDTGKGRSKQSSNKV). Residues 70–319 (THGFHLVEGK…DDISCIVIRF (250 aa)) enclose the PPM-type phosphatase domain. Mn(2+) contacts are provided by D107, G108, D271, and D310.

It belongs to the PP2C family. Requires Mg(2+) as cofactor. It depends on Mn(2+) as a cofactor.

It catalyses the reaction O-phospho-L-seryl-[protein] + H2O = L-seryl-[protein] + phosphate. The enzyme catalyses O-phospho-L-threonyl-[protein] + H2O = L-threonyl-[protein] + phosphate. This Oryza sativa subsp. japonica (Rice) protein is Probable protein phosphatase 2C 44.